Consider the following 381-residue polypeptide: MSLNMFWFLPTHGDGHYLGTEEGSRSVDHGYLQQIAQVADRLGYTGVLIPTGRSCEDAWLVAASMIPVTQRLKFLVALRPSVTSPTVAARQAATLDRLSNGRALFNLVTGSDPQELAGDGVFLDHSERYEASAEFTQVWRRLLLGETVDFNGKHIHVRGAKLLFPPIQQPYPPLYFGGSSDVAQDLAAEQVDLYLTWGEPPELVKEKIAHVRAKAAAHGRKIRFGIRLHVIVRETNDEAWQAAERLISHLDDETIAKAQAAFARTDSVGQQRMAALHNGKRDNLEISPNLWAGVGLVRGGAGTALVGDGPTVAARINEYAALGIDSFVLSGYPHLEEAYRIGELLFPHLDVAIPEIPQPQLLNPQGEAVANDFIPRNVAQS.

It belongs to the SsuD family. Homotetramer.

It carries out the reaction an alkanesulfonate + FMNH2 + O2 = an aldehyde + FMN + sulfite + H2O + 2 H(+). Its function is as follows. Catalyzes the desulfonation of aliphatic sulfonates. This chain is Alkanesulfonate monooxygenase, found in Escherichia fergusonii (strain ATCC 35469 / DSM 13698 / CCUG 18766 / IAM 14443 / JCM 21226 / LMG 7866 / NBRC 102419 / NCTC 12128 / CDC 0568-73).